We begin with the raw amino-acid sequence, 367 residues long: Terpene cyclase verU1 (367 aa).

A helical transmembrane segment spans residues 8–28 (IRCSLLLLGLVGIYTVWISSF). Asn-50 carries N-linked (GlcNAc...) asparagine glycosylation. A run of 8 helical transmembrane segments spans residues 57 to 77 (FTGI…YWPV), 85 to 105 (LSLI…LFAL), 120 to 140 (MAMF…PIYC), 169 to 189 (CLLG…PAVV), 197 to 217 (IIAL…LTHL), 239 to 259 (ISAM…SLLA), 292 to 312 (FQWD…GLHI), and 327 to 347 (LIPE…AALY). An N-linked (GlcNAc...) asparagine glycan is attached at Asn-352.

It belongs to the membrane-bound ascI terpene cyclase family.

Its subcellular location is the membrane. It participates in secondary metabolite biosynthesis; terpenoid biosynthesis. It functions in the pathway mycotoxin biosynthesis. Functionally, terpene cyclase; part of the gene cluster that mediates the biosynthesis of the neurotoxin verrucosidin, a methylated alpha-pyrone polyketide that inhibits oxidative phosphorylation in mitochondria and thereby causes neurological diseases. The carbon backbone of verrucosidin is synthesized by the HR-PKS verA, and further modified by the other verrucodidin cluster enzymes. The protein is Terpene cyclase verU1 of Penicillium polonicum.